The chain runs to 185 residues: Ribosome-recycling factor (185 aa).

Belongs to the RRF family.

The protein localises to the cytoplasm. In terms of biological role, responsible for the release of ribosomes from messenger RNA at the termination of protein biosynthesis. May increase the efficiency of translation by recycling ribosomes from one round of translation to another. In Thermomicrobium roseum (strain ATCC 27502 / DSM 5159 / P-2), this protein is Ribosome-recycling factor.